A 324-amino-acid chain; its full sequence is Beta-ketoacyl-[acyl-carrier-protein] synthase III (324 aa).

Residues C114 and H246 contribute to the active site. The ACP-binding stretch occupies residues 247-251 (QANLR). Residue N276 is part of the active site.

It belongs to the thiolase-like superfamily. FabH family. As to quaternary structure, homodimer.

The protein localises to the cytoplasm. The catalysed reaction is malonyl-[ACP] + acetyl-CoA + H(+) = 3-oxobutanoyl-[ACP] + CO2 + CoA. The protein operates within lipid metabolism; fatty acid biosynthesis. In terms of biological role, catalyzes the condensation reaction of fatty acid synthesis by the addition to an acyl acceptor of two carbons from malonyl-ACP. Catalyzes the first condensation reaction which initiates fatty acid synthesis and may therefore play a role in governing the total rate of fatty acid production. Possesses both acetoacetyl-ACP synthase and acetyl transacylase activities. Its substrate specificity determines the biosynthesis of branched-chain and/or straight-chain of fatty acids. The polypeptide is Beta-ketoacyl-[acyl-carrier-protein] synthase III (Campylobacter jejuni subsp. jejuni serotype O:6 (strain 81116 / NCTC 11828)).